The following is a 376-amino-acid chain: 23S rRNA (uracil(747)-C(5))-methyltransferase RlmC (376 aa).

Residues Cys-3, Cys-11, Cys-14, and Cys-87 each contribute to the [4Fe-4S] cluster site. S-adenosyl-L-methionine is bound by residues Gln-212, Phe-241, Glu-262, and Asn-307. Cys-334 functions as the Nucleophile in the catalytic mechanism.

It belongs to the class I-like SAM-binding methyltransferase superfamily. RNA M5U methyltransferase family. RlmC subfamily.

The enzyme catalyses uridine(747) in 23S rRNA + S-adenosyl-L-methionine = 5-methyluridine(747) in 23S rRNA + S-adenosyl-L-homocysteine + H(+). In terms of biological role, catalyzes the formation of 5-methyl-uridine at position 747 (m5U747) in 23S rRNA. This chain is 23S rRNA (uracil(747)-C(5))-methyltransferase RlmC, found in Salmonella typhimurium (strain LT2 / SGSC1412 / ATCC 700720).